The sequence spans 348 residues: MALTVDVVGPAPWGFRISGGRDFHTPIMVTKVTERGKAEAADLRPGDIIVSINGESAKDMLHAEAQSKIRQSPSPLRLQLDRPQAASPGQANGESSLEVLATRFQSSRRTHTDSQASLSPRPCSPFFTLPPTSPQAPTGEVVTSHSFQSLAYSLEPASADHLYYGGRRGSRQASLSPAGDSAVLVLPPPPSPGARSSSSRLSVVSEGESHLLREDSEVFKMLQENREARMAPRQSSSFRLLQEALEAEERGGTPAYLPSSLSPQSSLPTSRALASPPKLHTCEKCNTSIANQAVRIQEGRYRHPGCYTCADCGLNLKMRGHFWVGDELYCEKHARQRYSAPPTLNSQA.

The 84-residue stretch at methionine 1 to glutamine 84 folds into the PDZ domain. The disordered stretch occupies residues serine 67–glycine 139. Residues arginine 103–leucine 118 are compositionally biased toward polar residues. Serine 117, serine 119, and serine 124 each carry phosphoserine. Phosphothreonine is present on residues threonine 128 and threonine 132. A phosphoserine mark is found at serine 133, serine 153, serine 191, serine 197, serine 198, serine 202, serine 209, and serine 262. The tract at residues glycine 165–serine 202 is disordered. The span at glycine 193–serine 202 shows a compositional bias: low complexity. Residues glutamate 249–serine 275 are disordered. A compositionally biased stretch (low complexity) spans leucine 257–serine 270. Residues histidine 280 to alanine 340 form the LIM zinc-binding domain.

In terms of assembly, interacts with alpha-actinins ACTN1 and ACTN4, FLNA and MYH9. Interacts (via LIM zinc-binding domain) with MKRN2.

It is found in the cytoplasm. The protein localises to the cytoskeleton. Functionally, probable adapter protein located at the actin cytoskeleton that promotes cell attachment. Necessary for the migratory capacity of epithelial cells. Overexpression enhances cell adhesion to collagen and fibronectin and suppresses anchorage independent growth. May contribute to tumor cell migratory capacity. This chain is PDZ and LIM domain protein 2 (PDLIM2), found in Bos taurus (Bovine).